A 442-amino-acid chain; its full sequence is Chromosomal replication initiator protein DnaA (442 aa).

Residues 1–69 (METLWDGILS…AQAGEQVIGR (69 aa)) are domain I, interacts with DnaA modulators. Residues 69–103 (RPIQVDFIVSEQSEEALKPVIEREPAPAAPPANVA) are domain II. Residues 104–320 (SLNSKYTFSR…GALIRAVAYV (217 aa)) form a domain III, AAA+ region region. G148, G150, K151, and T152 together coordinate ATP. The segment at 321 to 442 (SISGLPMTVE…GNRLEADARH (122 aa)) is domain IV, binds dsDNA.

This sequence belongs to the DnaA family. As to quaternary structure, oligomerizes as a right-handed, spiral filament on DNA at oriC.

It localises to the cytoplasm. Functionally, plays an essential role in the initiation and regulation of chromosomal replication. ATP-DnaA binds to the origin of replication (oriC) to initiate formation of the DNA replication initiation complex once per cell cycle. Binds the DnaA box (a 9 base pair repeat at the origin) and separates the double-stranded (ds)DNA. Forms a right-handed helical filament on oriC DNA; dsDNA binds to the exterior of the filament while single-stranded (ss)DNA is stabiized in the filament's interior. The ATP-DnaA-oriC complex binds and stabilizes one strand of the AT-rich DNA unwinding element (DUE), permitting loading of DNA polymerase. After initiation quickly degrades to an ADP-DnaA complex that is not apt for DNA replication. Binds acidic phospholipids. In Gloeobacter violaceus (strain ATCC 29082 / PCC 7421), this protein is Chromosomal replication initiator protein DnaA.